The following is a 203-amino-acid chain: RNA pyrophosphohydrolase (203 aa).

In terms of domain architecture, Nudix hydrolase spans 6-149; sequence GFRPNVGIIL…KRNVYQMALT (144 aa). Positions 38–59 match the Nudix box motif; the sequence is GGIKHGESPEQAMFRELHEEVG. The tract at residues 170–203 is disordered; it reads RAHRRDEGSEHNDHLDPTGPHDAGASVSEPKQAE. Residues 173–185 show a composition bias toward basic and acidic residues; sequence RRDEGSEHNDHLD.

It belongs to the Nudix hydrolase family. RppH subfamily. It depends on a divalent metal cation as a cofactor.

In terms of biological role, accelerates the degradation of transcripts by removing pyrophosphate from the 5'-end of triphosphorylated RNA, leading to a more labile monophosphorylated state that can stimulate subsequent ribonuclease cleavage. This Leptothrix cholodnii (strain ATCC 51168 / LMG 8142 / SP-6) (Leptothrix discophora (strain SP-6)) protein is RNA pyrophosphohydrolase.